Reading from the N-terminus, the 545-residue chain is CTP synthase (545 aa).

The tract at residues 1-266 (MITNYIFVTG…DQYICDKFNL (266 aa)) is amidoligase domain. S14 is a binding site for CTP. UTP is bound at residue S14. Residues 15-20 (SLGKGI) and D72 each bind ATP. Mg(2+) contacts are provided by D72 and E140. CTP-binding positions include 147–149 (DIE), 187–192 (KTKPTQ), and K223. Residues 187 to 192 (KTKPTQ) and K223 each bind UTP. 239-241 (KDV) contributes to the ATP binding site. Positions 291 to 542 (SIGMVGKYIE…VKSALAHHQD (252 aa)) constitute a Glutamine amidotransferase type-1 domain. Residue G352 coordinates L-glutamine. C379 acts as the Nucleophile; for glutamine hydrolysis in catalysis. Residues 380–383 (LGMQ), E403, and R470 each bind L-glutamine. Residues H515 and E517 contribute to the active site.

The protein belongs to the CTP synthase family. Homotetramer.

It catalyses the reaction UTP + L-glutamine + ATP + H2O = CTP + L-glutamate + ADP + phosphate + 2 H(+). It carries out the reaction L-glutamine + H2O = L-glutamate + NH4(+). The enzyme catalyses UTP + NH4(+) + ATP = CTP + ADP + phosphate + 2 H(+). The protein operates within pyrimidine metabolism; CTP biosynthesis via de novo pathway; CTP from UDP: step 2/2. Allosterically activated by GTP, when glutamine is the substrate; GTP has no effect on the reaction when ammonia is the substrate. The allosteric effector GTP functions by stabilizing the protein conformation that binds the tetrahedral intermediate(s) formed during glutamine hydrolysis. Inhibited by the product CTP, via allosteric rather than competitive inhibition. Functionally, catalyzes the ATP-dependent amination of UTP to CTP with either L-glutamine or ammonia as the source of nitrogen. Regulates intracellular CTP levels through interactions with the four ribonucleotide triphosphates. In Hamiltonella defensa subsp. Acyrthosiphon pisum (strain 5AT), this protein is CTP synthase.